The chain runs to 278 residues: Tyrosine-protein phosphatase pmp1 (278 aa).

Residues glycine 60–lysine 214 form the Tyrosine-protein phosphatase domain. Cysteine 158 (phosphocysteine intermediate) is an active-site residue. A disordered region spans residues serine 217 to serine 278. The span at serine 252–serine 278 shows a compositional bias: polar residues.

It belongs to the protein-tyrosine phosphatase family. Non-receptor class dual specificity subfamily.

The catalysed reaction is O-phospho-L-tyrosyl-[protein] + H2O = L-tyrosyl-[protein] + phosphate. Its function is as follows. Dual specificity phosphatase that dephosphorylates MAP kinase pmk1 on a Tyr. Has a role in chloride ion homeostasis by inactivating this pmk1 MAP kinase pathway. This Schizosaccharomyces pombe (strain 972 / ATCC 24843) (Fission yeast) protein is Tyrosine-protein phosphatase pmp1 (pmp1).